Here is a 240-residue protein sequence, read N- to C-terminus: Ribonuclease PH (240 aa).

Phosphate-binding positions include Arg87 and 125–127 (GTR).

This sequence belongs to the RNase PH family. In terms of assembly, homohexameric ring arranged as a trimer of dimers.

It catalyses the reaction tRNA(n+1) + phosphate = tRNA(n) + a ribonucleoside 5'-diphosphate. Its function is as follows. Phosphorolytic 3'-5' exoribonuclease that plays an important role in tRNA 3'-end maturation. Removes nucleotide residues following the 3'-CCA terminus of tRNAs; can also add nucleotides to the ends of RNA molecules by using nucleoside diphosphates as substrates, but this may not be physiologically important. Probably plays a role in initiation of 16S rRNA degradation (leading to ribosome degradation) during starvation. This is Ribonuclease PH from Stutzerimonas stutzeri (strain A1501) (Pseudomonas stutzeri).